We begin with the raw amino-acid sequence, 472 residues long: Eukaryotic translation initiation factor 2 subunit 3B (472 aa).

Residue A2 is modified to N-acetylalanine. S16 carries the post-translational modification Phosphoserine. The region spanning 39–248 is the tr-type G domain; that stretch reads QATINIGTIG…IVKKIPVPPR (210 aa). The interval 48-55 is G1; sequence GHVAHGKS. 51-56 contacts GTP; the sequence is AHGKST. The tract at residues 76–80 is G2; the sequence is NITIK. Positions 134–137 are G3; sequence DCPG. GTP is bound by residues 190 to 193 and 225 to 227; these read NKID and SAQ. Residues 190-193 are G4; it reads NKID. Positions 225 to 227 are G5; it reads SAQ.

This sequence belongs to the TRAFAC class translation factor GTPase superfamily. Classic translation factor GTPase family. EIF2G subfamily. As to quaternary structure, eIF2 is a heterotrimer composed of an alpha, a beta and a gamma chain. eIF2 is member of the 43S pre-initiation complex (43S PIC). As to expression, specifically expressed in testis at the mRNA level.

It carries out the reaction GTP + H2O = GDP + phosphate + H(+). Member of the eIF2 complex that functions in the early steps of protein synthesis by forming a ternary complex with GTP and initiator tRNA. This complex binds to a 40S ribosomal subunit, followed by mRNA binding to form the 43S pre-initiation complex (43S PIC). Junction of the 60S ribosomal subunit to form the 80S initiation complex is preceded by hydrolysis of the GTP bound to eIF2 and release of an eIF2-GDP binary complex. In order for eIF2 to recycle and catalyze another round of initiation, the GDP bound to eIF2 must exchange with GTP by way of a reaction catalyzed by eIF-2B. In Homo sapiens (Human), this protein is Eukaryotic translation initiation factor 2 subunit 3B.